The following is a 363-amino-acid chain: 3-dehydroquinate synthase (363 aa).

Residues 75-80 (DAEEGK), 109-113 (GAVTD), 133-134 (TS), K146, K155, and 173-176 (TLST) each bind NAD(+). Zn(2+) is bound by residues E188, H251, and H267.

Belongs to the sugar phosphate cyclases superfamily. Dehydroquinate synthase family. Requires Co(2+) as cofactor. Zn(2+) is required as a cofactor. It depends on NAD(+) as a cofactor.

The protein localises to the cytoplasm. It catalyses the reaction 7-phospho-2-dehydro-3-deoxy-D-arabino-heptonate = 3-dehydroquinate + phosphate. It functions in the pathway metabolic intermediate biosynthesis; chorismate biosynthesis; chorismate from D-erythrose 4-phosphate and phosphoenolpyruvate: step 2/7. In terms of biological role, catalyzes the conversion of 3-deoxy-D-arabino-heptulosonate 7-phosphate (DAHP) to dehydroquinate (DHQ). The chain is 3-dehydroquinate synthase from Arthrobacter sp. (strain FB24).